We begin with the raw amino-acid sequence, 267 residues long: Exosome complex component Rrp42 (267 aa).

The protein belongs to the RNase PH family. Rrp42 subfamily. As to quaternary structure, component of the archaeal exosome complex. Forms a hexameric ring-like arrangement composed of 3 Rrp41-Rrp42 heterodimers. The hexameric ring associates with a trimer of Rrp4 and/or Csl4 subunits.

The protein resides in the cytoplasm. Its function is as follows. Non-catalytic component of the exosome, which is a complex involved in RNA degradation. Contributes to the structuring of the Rrp41 active site. In Methanopyrus kandleri (strain AV19 / DSM 6324 / JCM 9639 / NBRC 100938), this protein is Exosome complex component Rrp42.